The sequence spans 397 residues: Protochlorophyllide reductase, chloroplastic (397 aa).

Residues 1-57 constitute a chloroplast transit peptide; it reads MALTMSAKSVSARAQVSSKAQAAPAVAVSGRTSSRVMPAPALAARSSVARTPLVVCA.

This sequence belongs to the short-chain dehydrogenases/reductases (SDR) family. POR subfamily.

The protein resides in the plastid. It localises to the chloroplast. It carries out the reaction chlorophyllide a + NADP(+) = protochlorophyllide a + NADPH + H(+). It functions in the pathway porphyrin-containing compound metabolism; chlorophyll biosynthesis. Functionally, phototransformation of protochlorophyllide (Pchlide) to chlorophyllide (Chlide). This is Protochlorophyllide reductase, chloroplastic (PORA) from Chlamydomonas reinhardtii (Chlamydomonas smithii).